The sequence spans 215 residues: Probable Rab-related GTPase (215 aa).

20–27 contacts GTP; sequence GSSGVGKS. Positions 42-50 match the Effector region motif; sequence VSPTIGAAF. GTP-binding positions include 69–73 and 127–130; these read DTAGQ and NKID. 2 S-geranylgeranyl cysteine; by host lipidation sites follow: Cys211 and Cys212. Residue Cys212 is modified to Cysteine methyl ester; by host. Positions 213-215 are cleaved as a propeptide — removed in mature form; sequence YIS.

The protein belongs to the small GTPase superfamily. Rab family.

It localises to the host cell membrane. May be involved in protein transport. The sequence is that of Probable Rab-related GTPase from Acanthamoeba polyphaga mimivirus (APMV).